Here is a 181-residue protein sequence, read N- to C-terminus: ADP-ribosylation factor 1 (181 aa).

The N-myristoyl glycine moiety is linked to residue Gly-2. GTP contacts are provided by residues 24–31 (GLDAAGKT), 67–71 (DVGGQ), and 126–129 (NKQD).

Belongs to the small GTPase superfamily. Arf family.

It localises to the golgi apparatus. The catalysed reaction is GTP + H2O = GDP + phosphate + H(+). GTP-binding protein involved in protein trafficking; may modulate vesicle budding and uncoating within the Golgi apparatus. The protein is ADP-ribosylation factor 1 (ARF1) of Catharanthus roseus (Madagascar periwinkle).